A 626-amino-acid chain; its full sequence is Probable potassium transport system protein Kup (626 aa).

A run of 12 helical transmembrane segments spans residues 13–33 (VALM…SPLY), 53–73 (VLSI…VLLI), 102–122 (FFVV…MITP), 138–158 (HTLD…LFAI), 169–189 (LFGP…GWQV), 207–227 (FVFE…LALT), 248–268 (WFSM…ALLL), 277–297 (PFFL…ATVA), 338–358 (IYLP…VITF), 367–387 (AYGF…FAVL), 399–419 (WMLV…ANIF), and 421–441 (IHEG…LMMT).

It belongs to the HAK/KUP transporter (TC 2.A.72) family.

Its subcellular location is the cell inner membrane. The enzyme catalyses K(+)(in) + H(+)(in) = K(+)(out) + H(+)(out). In terms of biological role, transport of potassium into the cell. Likely operates as a K(+):H(+) symporter. The polypeptide is Probable potassium transport system protein Kup (Bordetella avium (strain 197N)).